The following is a 335-amino-acid chain: Methionine import ATP-binding protein MetN (335 aa).

Positions 2–241 constitute an ABC transporter domain; it reads IQFKDSYKHY…PQHPTTRSFV (240 aa). 38-45 provides a ligand contact to ATP; it reads GHSGAGKS.

The protein belongs to the ABC transporter superfamily. Methionine importer (TC 3.A.1.24) family. As to quaternary structure, the complex is composed of two ATP-binding proteins (MetN), two transmembrane proteins (MetI) and a solute-binding protein (MetQ).

It is found in the cell inner membrane. It catalyses the reaction L-methionine(out) + ATP + H2O = L-methionine(in) + ADP + phosphate + H(+). The enzyme catalyses D-methionine(out) + ATP + H2O = D-methionine(in) + ADP + phosphate + H(+). In terms of biological role, part of the ABC transporter complex MetNIQ involved in methionine import. Responsible for energy coupling to the transport system. The sequence is that of Methionine import ATP-binding protein MetN from Xylella fastidiosa (strain Temecula1 / ATCC 700964).